The chain runs to 85 residues: Beta-insect depressant toxin Lqh-dprIT3g (85 aa).

Positions 1 to 21 are cleaved as a signal peptide; the sequence is MKLLLLLTISASMLIEGLVNA. In terms of domain architecture, LCN-type CS-alpha/beta spans 22–82; that stretch reads DGYIRGGDGC…EWDYETDTCG (61 aa). Cystine bridges form between cysteine 31–cysteine 81, cysteine 35–cysteine 56, cysteine 42–cysteine 63, and cysteine 46–cysteine 65. Glycine 82 carries the post-translational modification Glycine amide.

The protein belongs to the long (4 C-C) scorpion toxin superfamily. Sodium channel inhibitor family. Beta subfamily. As to expression, expressed by the venom gland.

The protein localises to the secreted. Depressant insect beta-toxins cause a transient contraction paralysis followed by a slow flaccid paralysis. They bind voltage-independently at site-4 of sodium channels (Nav) and block action potentials, primarily by depolarizing the axonal membrane and suppressing the sodium current. This depressant toxin is active only on insects. It is found in a relatively small amount in the venom. This Leiurus hebraeus (Hebrew deathstalker scorpion) protein is Beta-insect depressant toxin Lqh-dprIT3g.